The following is a 94-amino-acid chain: DNA-directed RNA polymerase subunit Rpo11 (94 aa).

It belongs to the archaeal Rpo11/eukaryotic RPB11/RPC19 RNA polymerase subunit family. Part of the RNA polymerase complex.

The protein localises to the cytoplasm. The enzyme catalyses RNA(n) + a ribonucleoside 5'-triphosphate = RNA(n+1) + diphosphate. Its function is as follows. DNA-dependent RNA polymerase (RNAP) catalyzes the transcription of DNA into RNA using the four ribonucleoside triphosphates as substrates. The chain is DNA-directed RNA polymerase subunit Rpo11 from Natronomonas pharaonis (strain ATCC 35678 / DSM 2160 / CIP 103997 / JCM 8858 / NBRC 14720 / NCIMB 2260 / Gabara) (Halobacterium pharaonis).